A 231-amino-acid polypeptide reads, in one-letter code: NADH-ubiquinone oxidoreductase chain 4 (231 aa).

The next 7 membrane-spanning stretches (helical) occupy residues 1–21 (PIAGSMVLAAILLKLGGYGII), 34–54 (MFLPFIVLALWGAILANLTCL), 63–85 (IAYSSISHMGLVVAAIIIQTPWG), 89–111 (AMALMIAHGFTSSALFCLANTTY), 128–148 (ILPMATTWWLLTNLMNIAIPP), 156–176 (LLIMSALFNWCPTTIIMLGLS), and 211–231 (LLMILHLIPLMMISMKPELII).

This sequence belongs to the complex I subunit 4 family.

The protein localises to the mitochondrion membrane. The enzyme catalyses a ubiquinone + NADH + 5 H(+)(in) = a ubiquinol + NAD(+) + 4 H(+)(out). Core subunit of the mitochondrial membrane respiratory chain NADH dehydrogenase (Complex I) that is believed to belong to the minimal assembly required for catalysis. Complex I functions in the transfer of electrons from NADH to the respiratory chain. The immediate electron acceptor for the enzyme is believed to be ubiquinone. The polypeptide is NADH-ubiquinone oxidoreductase chain 4 (MT-ND4) (Agkistrodon piscivorus piscivorus (Eastern cottonmouth)).